The primary structure comprises 321 residues: Olfactory receptor 51V1 (321 aa).

The Extracellular portion of the chain corresponds to 1 to 34 (MFLSSRMITSVSPSTSTNSSFLLTGFSGMEQQYP). A glycan (N-linked (GlcNAc...) asparagine) is linked at Asn18. A helical membrane pass occupies residues 35-55 (WLSIPFSSIYAMVLLGNCMVL). Topologically, residues 56–63 (HVIWTEPS) are cytoplasmic. A helical transmembrane segment spans residues 64–84 (LHQPMFYFLSMLALTDLCMGL). The Extracellular segment spans residues 85–108 (STVYTVLGILWGIIREISLDSCIA). The cysteines at positions 106 and 188 are disulfide-linked. A helical membrane pass occupies residues 109 to 129 (QSYFIHGLSFMESSVLLTMAF). Residues 130 to 148 (DRYIAICNPLRYSSILTNS) lie on the Cytoplasmic side of the membrane. A helical transmembrane segment spans residues 149–169 (RIIKIGLTIIGRSFFFITPPI). The Extracellular portion of the chain corresponds to 170-205 (ICLKFFNYCHFHILSHSFCLHQDLLRLACSDIRFNS). The helical transmembrane segment at 206 to 226 (YYALMLVICILLLDAILILFS) threads the bilayer. The Cytoplasmic portion of the chain corresponds to 227–246 (YILILKSVLAVASQEERHKL). Residues 247-267 (FQTCISHICAVLVFYIPIISL) traverse the membrane as a helical segment. Over 268–282 (TMVHRFGKHLSPVAH) the chain is Extracellular. Residues 283-303 (VLIGNIYILFPPLMNPIIYSV) traverse the membrane as a helical segment. Topologically, residues 304–321 (KTQQIHTRMLRLFSLKRY) are cytoplasmic.

The protein belongs to the G-protein coupled receptor 1 family.

The protein resides in the cell membrane. Functionally, odorant receptor. The chain is Olfactory receptor 51V1 (OR51V1) from Homo sapiens (Human).